A 950-amino-acid polypeptide reads, in one-letter code: Bifunctional glutamine synthetase adenylyltransferase/adenylyl-removing enzyme (950 aa).

The interval 1–443 (MSLPSPLLPV…VFVTLIGDEE (443 aa)) is adenylyl removase. The interval 450-950 (ERHFNELWDM…WQEWLESSTI (501 aa)) is adenylyl transferase.

It belongs to the GlnE family. Mg(2+) serves as cofactor.

It catalyses the reaction [glutamine synthetase]-O(4)-(5'-adenylyl)-L-tyrosine + phosphate = [glutamine synthetase]-L-tyrosine + ADP. It carries out the reaction [glutamine synthetase]-L-tyrosine + ATP = [glutamine synthetase]-O(4)-(5'-adenylyl)-L-tyrosine + diphosphate. Involved in the regulation of glutamine synthetase GlnA, a key enzyme in the process to assimilate ammonia. When cellular nitrogen levels are high, the C-terminal adenylyl transferase (AT) inactivates GlnA by covalent transfer of an adenylyl group from ATP to specific tyrosine residue of GlnA, thus reducing its activity. Conversely, when nitrogen levels are low, the N-terminal adenylyl removase (AR) activates GlnA by removing the adenylyl group by phosphorolysis, increasing its activity. The regulatory region of GlnE binds the signal transduction protein PII (GlnB) which indicates the nitrogen status of the cell. The polypeptide is Bifunctional glutamine synthetase adenylyltransferase/adenylyl-removing enzyme (Vibrio vulnificus (strain YJ016)).